The following is a 1314-amino-acid chain: AT-rich interactive domain-containing protein 4B (1314 aa).

2 disordered regions span residues 123–169 (LPLT…RKQT) and 266–306 (KTEL…EPFP). Phosphoserine is present on residues Ser-276, Ser-295, and Ser-296. Residues 277 to 305 (EAEEEEEEEDDEKEKEDNSSEEEEEIEPF) are compositionally biased toward acidic residues. Positions 306–398 (PEERENFLQQ…YLYGFEEYCR (93 aa)) constitute an ARID domain. Glycyl lysine isopeptide (Lys-Gly) (interchain with G-Cter in SUMO2) cross-links involve residues Lys-428 and Lys-461. Positions 439 to 464 (NVEDSKNVMPKEETPAEDESERKENI) are enriched in basic and acidic residues. 5 disordered regions span residues 439 to 577 (NVED…KVQV), 635 to 678 (IKHR…SPEM), 709 to 888 (ASES…EEKR), 943 to 1215 (KELF…RLPK), and 1256 to 1290 (VASIDRRRKRLKKKERESAATSSSSSSPSSSSITA). Ser-482 is subject to Phosphoserine. Residues 486–511 (KEAHITKLEENENLEDKDGGRARTEE) show a composition bias toward basic and acidic residues. A compositionally biased stretch (acidic residues) spans 531–567 (NKEEDEDDEEIEEEEEEDEEEDEDEDDDDNNEEEEFE). The Tudor-knot domain occupies 572 to 624 (GMKVQVRYGRGKNQKMYEASIKDSDVEGGEALYLVHYCGWNVRYDEWIKADKI). Over residues 643-656 (NKLDKEKDRDEKYS) the composition is skewed to basic and acidic residues. Residues Ser-666, Ser-668, Ser-675, and Ser-717 each carry the phosphoserine modification. Composition is skewed to basic and acidic residues over residues 722–754 (ERCTQDVDNIGKDESKVEHSTHSRNELISKEEQ) and 778–787 (SPERLRKDME). Residue Lys-751 forms a Glycyl lysine isopeptide (Lys-Gly) (interchain with G-Cter in SUMO2) linkage. Phosphoserine is present on residues Ser-778 and Ser-790. Residues 788–800 (AISEDTDFEEEDE) are compositionally biased toward acidic residues. Phosphothreonine is present on Thr-793. 3 stretches are compositionally biased toward basic and acidic residues: residues 808–817 (VKKDTTDKAL), 841–853 (GKKEDRTKSKEPL), and 997–1012 (KPIEEKPLEVSDRKTE). Polar residues predominate over residues 1013–1023 (FPSSGSNSVLN). Position 1016 is a phosphoserine (Ser-1016). Thr-1028 carries the phosphothreonine modification. Over residues 1030–1051 (ESPSSVTITEASQQQSSVTVSV) the composition is skewed to low complexity. Ser-1031 bears the Phosphoserine mark. Basic and acidic residues predominate over residues 1058–1067 (EEVRSIKSET). Low complexity predominate over residues 1089–1103 (SSPAGFDASVSSSSS). Basic residues predominate over residues 1132-1150 (KKQKRSHKATVVNNKKKGK). Position 1152 is a phosphothreonine (Thr-1152). Ser-1154, Ser-1155, Ser-1157, and Ser-1161 each carry phosphoserine. The segment covering 1164–1186 (ESVTKTQTIKSVPTGMKTHNSKS) has biased composition (polar residues). Basic and acidic residues predominate over residues 1198–1210 (RNGDKDPDLKEPS). A coiled-coil region spans residues 1227-1272 (ENMTSAERISILQEKLQEIRKHYLSLKSEVASIDRRRKRLKKKERE). Over residues 1274–1290 (AATSSSSSSPSSSSITA) the composition is skewed to low complexity.

In terms of assembly, component of a Sin3A corepressor complex consisting of SIN3A, SAP130, SUDS3/SAP45, SAP180, HDAC1 and HDAC2. Interacts with ARID4A. Interacts with AR. As to expression, expressed in Sertoli cells of the testis.

Its subcellular location is the nucleus. Functionally, acts as a transcriptional repressor. May function in the assembly and/or enzymatic activity of the Sin3A corepressor complex or in mediating interactions between the complex and other regulatory complexes. Plays a role in the regulation of epigenetic modifications at the PWS/AS imprinting center near the SNRPN promoter, where it might function as part of a complex with RB1 and ARID4A. Involved in spermatogenesis, together with ARID4A, where it functions as a transcriptional coactivator for AR (androgen receptor) and enhances expression of genes required for sperm maturation. Regulates expression of the tight junction protein CLDN3 in the testis, which is important for integrity of the blood-testis barrier. Plays a role in myeloid homeostasis where it regulates the histone methylation state of bone marrow cells and expression of various genes involved in hematopoiesis. May function as a leukemia suppressor. The polypeptide is AT-rich interactive domain-containing protein 4B (Arid4b) (Mus musculus (Mouse)).